The sequence spans 283 residues: Demethylrebeccamycin-D-glucose O-methyltransferase (283 aa).

S-adenosyl-L-methionine-binding positions include serine 101, glutamine 106, aspartate 129–alanine 130, leucine 146, and histidine 151.

It belongs to the methyltransferase superfamily. As to quaternary structure, monomer.

It catalyses the reaction 4'-demethylrebeccamycin + S-adenosyl-L-methionine = rebeccamycin + S-adenosyl-L-homocysteine + H(+). Its function is as follows. Glycosyl O-methyltransferase that catalyzes the final step in the biosynthesis of rebeccamycin, an indolocarbazole alkaloid that inhibits topoisomerase 1. Has broad substrate specificity and functions as glycosyl O-methyltransferase on a number of rebeccamycin analogs. The polypeptide is Demethylrebeccamycin-D-glucose O-methyltransferase (rebM) (Lentzea aerocolonigenes (Lechevalieria aerocolonigenes)).